A 235-amino-acid chain; its full sequence is Glycerol-3-phosphate acyltransferase (235 aa).

A run of 6 helical transmembrane segments spans residues 4-24, 56-76, 90-110, 126-146, 152-172, and 191-211; these read LIVI…IIAG, AVTL…VVFF, VALR…TVFA, FGIA…TIFV, VASI…KYLF, and IHDS…FAII.

Belongs to the PlsY family. As to quaternary structure, probably interacts with PlsX.

It is found in the cell inner membrane. The enzyme catalyses an acyl phosphate + sn-glycerol 3-phosphate = a 1-acyl-sn-glycero-3-phosphate + phosphate. The protein operates within lipid metabolism; phospholipid metabolism. Catalyzes the transfer of an acyl group from acyl-phosphate (acyl-PO(4)) to glycerol-3-phosphate (G3P) to form lysophosphatidic acid (LPA). This enzyme utilizes acyl-phosphate as fatty acyl donor, but not acyl-CoA or acyl-ACP. The protein is Glycerol-3-phosphate acyltransferase of Prosthecochloris aestuarii (strain DSM 271 / SK 413).